A 509-amino-acid polypeptide reads, in one-letter code: Activin receptor type-1 (509 aa).

The signal sequence occupies residues 1-20 (MVDGVMILPVLMMMAFPSPS). The Extracellular portion of the chain corresponds to 21–123 (VEDEKPKVNQ…FPGTQNFHLE (103 aa)). Asparagine 102 carries an N-linked (GlcNAc...) asparagine glycan. A helical membrane pass occupies residues 124–146 (VGLIILSVVFAVCLLACILGVAL). Over 147–509 (RKFKRRNQER…NSLDKLKTDC (363 aa)) the chain is Cytoplasmic. One can recognise a GS domain in the interval 178-207 (STLAELLDHSCTSGSGSGLPFLVQRTVARQ). Residues 208-502 (ITLLECVGKG…KTLTKIDNSL (295 aa)) enclose the Protein kinase domain. Residues 214–222 (VGKGRYGEV) and lysine 235 contribute to the ATP site. The active-site Proton acceptor is aspartate 336. Serine 501 is subject to Phosphoserine.

It belongs to the protein kinase superfamily. TKL Ser/Thr protein kinase family. TGFB receptor subfamily. As to quaternary structure, interacts with FKBP1A. Interacts with FCHO1. Interacts with CLU. Interacts with type II receptors AMHR2 and ACVR2A. Interacts with BMP7. Interacts with BMP9. Interacts with BMP6 (when glycosylated); the interaction may induce HAMP expression. Interacts with TSC22D1/TSC-22. The cofactor is Mg(2+). It depends on Mn(2+) as a cofactor. In terms of tissue distribution, highly expressed in bone during developmental stages. Expressed in normal parenchymal cells, endothelial cells, fibroblasts and tumor-derived epithelial cells.

It is found in the membrane. It catalyses the reaction L-threonyl-[receptor-protein] + ATP = O-phospho-L-threonyl-[receptor-protein] + ADP + H(+). The catalysed reaction is L-seryl-[receptor-protein] + ATP = O-phospho-L-seryl-[receptor-protein] + ADP + H(+). In terms of biological role, bone morphogenetic protein (BMP) type I receptor that is involved in a wide variety of biological processes, including bone, heart, cartilage, nervous, and reproductive system development and regulation. As a type I receptor, forms heterotetrameric receptor complexes with the type II receptors AMHR2, ACVR2A ors ACVR2B. Upon binding of ligands such as BMP7 or BMP9 to the heteromeric complexes, type II receptors transphosphorylate ACVR1 intracellular domain. In turn, ACVR1 kinase domain is activated and subsequently phosphorylates SMAD1/5/8 proteins that transduce the signal. In addition to its role in mediating BMP pathway-specific signaling, suppresses TGFbeta/activin pathway signaling by interfering with the binding of activin to its type II receptor. Besides canonical SMAD signaling, can activate non-canonical pathways such as p38 mitogen-activated protein kinases/MAPKs. May promote the expression of HAMP, potentially via its interaction with BMP6. The protein is Activin receptor type-1 (Acvr1) of Mus musculus (Mouse).